The following is a 245-amino-acid chain: Thiopurine S-methyltransferase (245 aa).

An S-adenosyl-L-methionine-binding site is contributed by 29-40 (WREKWVDGKIGF). A substrate-binding site is contributed by Phe-40. The residue at position 58 (Lys-58) is an N6-acetyllysine. S-adenosyl-L-methionine contacts are provided by Leu-69, Glu-90, and Arg-152.

It belongs to the class I-like SAM-binding methyltransferase superfamily. TPMT family. Monomer.

It localises to the cytoplasm. It catalyses the reaction S-adenosyl-L-methionine + a thiopurine = S-adenosyl-L-homocysteine + a thiopurine S-methylether.. In Felis catus (Cat), this protein is Thiopurine S-methyltransferase (TPMT).